Here is a 146-residue protein sequence, read N- to C-terminus: Transcription initiation factor TFIID subunit 10b (146 aa).

A disordered region spans residues 16 to 43; sequence GASSHGQSSGGGGGGDRDRTTPSSHLSD.

This sequence belongs to the TAF10 family. Belongs to the TFIID complex which is composed of TATA binding protein (Tbp) and a number of TBP-associated factors (TAFs). The N-terminus interacts with the histone fold of Taf8. At embryonic stage 9, expression is seen in the mesodermal layer and midgut primordia. The mesoderm-specific expression persists in later stages of development and at its highest level is detected in midgut, hindgut, and differentiating somatic muscle fibers. Coexpressed with Taf10 in the lateral epidermis and anal plate.

The protein resides in the cytoplasm. The protein localises to the nucleus. In terms of biological role, TFIID is a multimeric protein complex that plays a central role in mediating promoter responses to various activators and repressors. The chain is Transcription initiation factor TFIID subunit 10b from Drosophila melanogaster (Fruit fly).